A 506-amino-acid chain; its full sequence is Zinc finger protein MAGPIE (506 aa).

The tract at residues M1–E53 is disordered. The segment covering S9–T21 has biased composition (low complexity). The segment covering D22–E33 has biased composition (basic and acidic residues). S60 carries the phosphoserine modification. C2H2-type zinc fingers lie at residues F70–H92 and Y111–H141. Residues I133 to K140 carry the Nuclear localization signal motif. A C2H2-type 2; degenerate zinc finger spans residues W146–G169. Residues C148, C151, H164, C168, C175, C177, H190, and C194 each coordinate Zn(2+). The CCHC-type 2; atypical zinc-finger motif lies at Y173 to A196. An SHR-binding region spans residues R183–D195.

Interacts with SHR, SCR and JKD, but not with itself. Interacts with SIEL. Binds to RGA and SCL3 competitively in the nucleus. As to expression, expressed in the ground tissue and stele cells of embryos and 2-days post-germination roots but not in the quiescent center. Detected only in cells that perform asymmetric cell divisions. In roots, present in cortex, endodermis, and pericycle layer.

The protein resides in the nucleus. In terms of biological role, transcription factor that regulates tissue boundaries and asymmetric cell division. Contributes to the sequestration of 'SHORT-ROOT' to the nucleus. Interacts with the SCR and MGP promoters. Does not show transcription activity by itself, but regulates the transcription of downstream genes through interaction with other transcription factors. Binds DNA via its zinc fingers. Recognizes and binds to SCL3 promoter sequence 5'-AGACAA-3' to promote its expression when in complex with RGA. Positively involved in gibberellic acid (GA) signaling. The chain is Zinc finger protein MAGPIE from Arabidopsis thaliana (Mouse-ear cress).